Here is a 938-residue protein sequence, read N- to C-terminus: Isoleucine--tRNA ligase (938 aa).

The short motif at proline 58–histidine 68 is the 'HIGH' region element. Glutamate 561 provides a ligand contact to L-isoleucyl-5'-AMP. Residues lysine 602–serine 606 carry the 'KMSKS' region motif. Lysine 605 contributes to the ATP binding site. Residues cysteine 901, cysteine 904, cysteine 921, and cysteine 924 each coordinate Zn(2+).

It belongs to the class-I aminoacyl-tRNA synthetase family. IleS type 1 subfamily. Monomer. Requires Zn(2+) as cofactor.

It is found in the cytoplasm. It carries out the reaction tRNA(Ile) + L-isoleucine + ATP = L-isoleucyl-tRNA(Ile) + AMP + diphosphate. In terms of biological role, catalyzes the attachment of isoleucine to tRNA(Ile). As IleRS can inadvertently accommodate and process structurally similar amino acids such as valine, to avoid such errors it has two additional distinct tRNA(Ile)-dependent editing activities. One activity is designated as 'pretransfer' editing and involves the hydrolysis of activated Val-AMP. The other activity is designated 'posttransfer' editing and involves deacylation of mischarged Val-tRNA(Ile). The polypeptide is Isoleucine--tRNA ligase (Klebsiella pneumoniae (strain 342)).